Here is a 333-residue protein sequence, read N- to C-terminus: Adenosine deaminase (333 aa).

Positions 12 and 14 each coordinate Zn(2+). Residues histidine 14, aspartate 16, and glycine 170 each contribute to the substrate site. Histidine 197 lines the Zn(2+) pocket. The active-site Proton donor is the glutamate 200. Aspartate 278 is a binding site for Zn(2+). Substrate is bound at residue aspartate 279.

This sequence belongs to the metallo-dependent hydrolases superfamily. Adenosine and AMP deaminases family. Adenosine deaminase subfamily. Requires Zn(2+) as cofactor.

It carries out the reaction adenosine + H2O + H(+) = inosine + NH4(+). The enzyme catalyses 2'-deoxyadenosine + H2O + H(+) = 2'-deoxyinosine + NH4(+). Functionally, catalyzes the hydrolytic deamination of adenosine and 2-deoxyadenosine. This is Adenosine deaminase from Edwardsiella ictaluri (strain 93-146).